A 377-amino-acid polypeptide reads, in one-letter code: Nitric oxide reductase FlRd-NAD(+) reductase (377 aa).

The protein belongs to the FAD-dependent oxidoreductase family. The cofactor is FAD.

Its subcellular location is the cytoplasm. The enzyme catalyses 2 reduced [nitric oxide reductase rubredoxin domain] + NAD(+) + H(+) = 2 oxidized [nitric oxide reductase rubredoxin domain] + NADH. It functions in the pathway nitrogen metabolism; nitric oxide reduction. Its function is as follows. One of at least two accessory proteins for anaerobic nitric oxide (NO) reductase. Reduces the rubredoxin moiety of NO reductase. This is Nitric oxide reductase FlRd-NAD(+) reductase from Escherichia coli O9:H4 (strain HS).